Reading from the N-terminus, the 497-residue chain is Probable cytosol aminopeptidase (497 aa).

Mn(2+)-binding residues include Lys-263 and Asp-268. Lys-275 is an active-site residue. Mn(2+) is bound by residues Asp-286, Asp-345, and Glu-347. Arg-349 is an active-site residue.

Belongs to the peptidase M17 family. Requires Mn(2+) as cofactor.

It localises to the cytoplasm. The catalysed reaction is Release of an N-terminal amino acid, Xaa-|-Yaa-, in which Xaa is preferably Leu, but may be other amino acids including Pro although not Arg or Lys, and Yaa may be Pro. Amino acid amides and methyl esters are also readily hydrolyzed, but rates on arylamides are exceedingly low.. It carries out the reaction Release of an N-terminal amino acid, preferentially leucine, but not glutamic or aspartic acids.. Its function is as follows. Presumably involved in the processing and regular turnover of intracellular proteins. Catalyzes the removal of unsubstituted N-terminal amino acids from various peptides. This Rhizobium meliloti (strain 1021) (Ensifer meliloti) protein is Probable cytosol aminopeptidase.